Here is a 157-residue protein sequence, read N- to C-terminus: Small ribosomal subunit protein uS7 (157 aa).

The protein belongs to the universal ribosomal protein uS7 family. As to quaternary structure, part of the 30S ribosomal subunit. Contacts proteins S9 and S11.

One of the primary rRNA binding proteins, it binds directly to 16S rRNA where it nucleates assembly of the head domain of the 30S subunit. Is located at the subunit interface close to the decoding center, probably blocks exit of the E-site tRNA. This Caulobacter vibrioides (strain ATCC 19089 / CIP 103742 / CB 15) (Caulobacter crescentus) protein is Small ribosomal subunit protein uS7.